The sequence spans 246 residues: Homeobox protein Hox-B4a (246 aa).

The interval 23-125 (YSQSDYLPSH…SQNTSTVSSR (103 aa)) is disordered. 2 stretches are compositionally biased toward polar residues: residues 39–48 (AQRQDPSFQH) and 112–123 (QTPTSQNTSTVS). The Antp-type hexapeptide motif lies at 130 to 135 (VYPWMK). A DNA-binding region (homeobox) is located at residues 151–210 (PKRSRTAYTRQQVLELEKEFHYNRYLTRRRRVEIAHTLCLSERQIKIWFQNRRMKWKKDH). Residues 210–246 (HKLPNTKIRSNSASTNSSGCPTLCSNQSRASGPPPSL) are disordered. Positions 216 to 239 (KIRSNSASTNSSGCPTLCSNQSRA) are enriched in polar residues.

The protein belongs to the Antp homeobox family. Deformed subfamily.

The protein resides in the nucleus. Its function is as follows. Sequence-specific transcription factor which is part of a developmental regulatory system that provides cells with specific positional identities on the anterior-posterior axis. The sequence is that of Homeobox protein Hox-B4a (hoxb4a) from Danio rerio (Zebrafish).